The primary structure comprises 302 residues: Methionyl-tRNA formyltransferase (302 aa).

(6S)-5,6,7,8-tetrahydrofolate is bound at residue 106-109 (SVLP).

Belongs to the Fmt family.

It carries out the reaction L-methionyl-tRNA(fMet) + (6R)-10-formyltetrahydrofolate = N-formyl-L-methionyl-tRNA(fMet) + (6S)-5,6,7,8-tetrahydrofolate + H(+). In terms of biological role, attaches a formyl group to the free amino group of methionyl-tRNA(fMet). The formyl group appears to play a dual role in the initiator identity of N-formylmethionyl-tRNA by promoting its recognition by IF2 and preventing the misappropriation of this tRNA by the elongation apparatus. In Hydrogenobaculum sp. (strain Y04AAS1), this protein is Methionyl-tRNA formyltransferase.